Reading from the N-terminus, the 486-residue chain is Glutamyl-tRNA(Gln) amidotransferase subunit A (486 aa).

Residues Lys74 and Ser149 each act as charge relay system in the active site. The Acyl-ester intermediate role is filled by Ser173.

It belongs to the amidase family. GatA subfamily. As to quaternary structure, heterotrimer of A, B and C subunits.

The enzyme catalyses L-glutamyl-tRNA(Gln) + L-glutamine + ATP + H2O = L-glutaminyl-tRNA(Gln) + L-glutamate + ADP + phosphate + H(+). In terms of biological role, allows the formation of correctly charged Gln-tRNA(Gln) through the transamidation of misacylated Glu-tRNA(Gln) in organisms which lack glutaminyl-tRNA synthetase. The reaction takes place in the presence of glutamine and ATP through an activated gamma-phospho-Glu-tRNA(Gln). This chain is Glutamyl-tRNA(Gln) amidotransferase subunit A, found in Prochlorococcus marinus (strain SARG / CCMP1375 / SS120).